The chain runs to 337 residues: GTP 3',8-cyclase (337 aa).

A Radical SAM core domain is found at M1–L226. R8 serves as a coordination point for GTP. Residues C15 and C19 each contribute to the [4Fe-4S] cluster site. Y21 serves as a coordination point for S-adenosyl-L-methionine. C22 provides a ligand contact to [4Fe-4S] cluster. R60 contacts GTP. An S-adenosyl-L-methionine-binding site is contributed by G64. T91 is a binding site for GTP. S115 contacts S-adenosyl-L-methionine. K155 is a GTP binding site. S-adenosyl-L-methionine is bound at residue M189. Residues C260 and C263 each coordinate [4Fe-4S] cluster. Residue R265–R267 participates in GTP binding. A [4Fe-4S] cluster-binding site is contributed by C277.

It belongs to the radical SAM superfamily. MoaA family. As to quaternary structure, monomer and homodimer. [4Fe-4S] cluster serves as cofactor.

It catalyses the reaction GTP + AH2 + S-adenosyl-L-methionine = (8S)-3',8-cyclo-7,8-dihydroguanosine 5'-triphosphate + 5'-deoxyadenosine + L-methionine + A + H(+). Its pathway is cofactor biosynthesis; molybdopterin biosynthesis. Functionally, catalyzes the cyclization of GTP to (8S)-3',8-cyclo-7,8-dihydroguanosine 5'-triphosphate. This Crocosphaera subtropica (strain ATCC 51142 / BH68) (Cyanothece sp. (strain ATCC 51142)) protein is GTP 3',8-cyclase.